A 237-amino-acid polypeptide reads, in one-letter code: Aliphatic sulfonates import ATP-binding protein SsuB 1 (237 aa).

The 217-residue stretch at 5 to 221 (LMNIRVDRKA…PRDRRDPLLA (217 aa)) folds into the ABC transporter domain. 38-45 (GPSGCGKS) contributes to the ATP binding site.

It belongs to the ABC transporter superfamily. Aliphatic sulfonates importer (TC 3.A.1.17.2) family. In terms of assembly, the complex is composed of two ATP-binding proteins (SsuB), two transmembrane proteins (SsuC) and a solute-binding protein (SsuA).

The protein localises to the cell inner membrane. It catalyses the reaction ATP + H2O + aliphatic sulfonate-[sulfonate-binding protein]Side 1 = ADP + phosphate + aliphatic sulfonateSide 2 + [sulfonate-binding protein]Side 1.. Its function is as follows. Part of the ABC transporter complex SsuABC involved in aliphatic sulfonates import. Responsible for energy coupling to the transport system. The chain is Aliphatic sulfonates import ATP-binding protein SsuB 1 from Pseudomonas savastanoi pv. phaseolicola (strain 1448A / Race 6) (Pseudomonas syringae pv. phaseolicola (strain 1448A / Race 6)).